A 603-amino-acid chain; its full sequence is Proline--tRNA ligase (603 aa).

This sequence belongs to the class-II aminoacyl-tRNA synthetase family. ProS type 1 subfamily. In terms of assembly, homodimer.

The protein resides in the cytoplasm. The enzyme catalyses tRNA(Pro) + L-proline + ATP = L-prolyl-tRNA(Pro) + AMP + diphosphate. In terms of biological role, catalyzes the attachment of proline to tRNA(Pro) in a two-step reaction: proline is first activated by ATP to form Pro-AMP and then transferred to the acceptor end of tRNA(Pro). As ProRS can inadvertently accommodate and process non-cognate amino acids such as alanine and cysteine, to avoid such errors it has two additional distinct editing activities against alanine. One activity is designated as 'pretransfer' editing and involves the tRNA(Pro)-independent hydrolysis of activated Ala-AMP. The other activity is designated 'posttransfer' editing and involves deacylation of mischarged Ala-tRNA(Pro). The misacylated Cys-tRNA(Pro) is not edited by ProRS. This Microcystis aeruginosa (strain NIES-843 / IAM M-2473) protein is Proline--tRNA ligase.